A 332-amino-acid polypeptide reads, in one-letter code: Protoheme IX farnesyltransferase (332 aa).

Transmembrane regions (helical) follow at residues Leu63 to Leu83, Thr109 to Val129, Leu132 to Leu152, Ile160 to Gly180, Trp188 to Leu208, Ile245 to Phe265, and Ala286 to Ile306.

The protein belongs to the UbiA prenyltransferase family. Protoheme IX farnesyltransferase subfamily.

Its subcellular location is the cell inner membrane. It carries out the reaction heme b + (2E,6E)-farnesyl diphosphate + H2O = Fe(II)-heme o + diphosphate. It participates in porphyrin-containing compound metabolism; heme O biosynthesis; heme O from protoheme: step 1/1. Converts heme B (protoheme IX) to heme O by substitution of the vinyl group on carbon 2 of heme B porphyrin ring with a hydroxyethyl farnesyl side group. This chain is Protoheme IX farnesyltransferase, found in Prochlorococcus marinus (strain MIT 9515).